The sequence spans 111 residues: Probable 4-amino-4-deoxy-L-arabinose-phosphoundecaprenol flippase subunit ArnE (111 aa).

The next 3 membrane-spanning stretches (helical) occupy residues 39 to 59 (WLAI…WVLQ), 61 to 81 (VPVG…TLAA), and 89 to 109 (VSLR…CMGV). The 70-residue stretch at 40–109 (LAISLLLLGG…IVAGVMCMGV (70 aa)) folds into the EamA domain.

Belongs to the ArnE family. In terms of assembly, heterodimer of ArnE and ArnF.

The protein resides in the cell inner membrane. The protein operates within bacterial outer membrane biogenesis; lipopolysaccharide biosynthesis. Its function is as follows. Translocates 4-amino-4-deoxy-L-arabinose-phosphoundecaprenol (alpha-L-Ara4N-phosphoundecaprenol) from the cytoplasmic to the periplasmic side of the inner membrane. The polypeptide is Probable 4-amino-4-deoxy-L-arabinose-phosphoundecaprenol flippase subunit ArnE (Sodalis glossinidius (strain morsitans)).